Reading from the N-terminus, the 170-residue chain is Urease accessory protein UreE (170 aa).

Belongs to the UreE family.

It is found in the cytoplasm. Involved in urease metallocenter assembly. Binds nickel. Probably functions as a nickel donor during metallocenter assembly. This is Urease accessory protein UreE from Helicobacter pylori (strain G27).